A 677-amino-acid polypeptide reads, in one-letter code: DNA ligase (677 aa).

NAD(+) contacts are provided by residues 34-38 (DLAFD), 83-84 (SL), and Glu115. Lys117 serves as the catalytic N6-AMP-lysine intermediate. NAD(+) contacts are provided by Arg138, Glu180, Lys297, and Lys321. Positions 416, 419, 434, and 439 each coordinate Zn(2+). In terms of domain architecture, BRCT spans 596-677 (KKTSQLAGLT…LIKMLETEQA (82 aa)).

This sequence belongs to the NAD-dependent DNA ligase family. LigA subfamily. It depends on Mg(2+) as a cofactor. Mn(2+) serves as cofactor.

It catalyses the reaction NAD(+) + (deoxyribonucleotide)n-3'-hydroxyl + 5'-phospho-(deoxyribonucleotide)m = (deoxyribonucleotide)n+m + AMP + beta-nicotinamide D-nucleotide.. In terms of biological role, DNA ligase that catalyzes the formation of phosphodiester linkages between 5'-phosphoryl and 3'-hydroxyl groups in double-stranded DNA using NAD as a coenzyme and as the energy source for the reaction. It is essential for DNA replication and repair of damaged DNA. The protein is DNA ligase of Acidobacterium capsulatum (strain ATCC 51196 / DSM 11244 / BCRC 80197 / JCM 7670 / NBRC 15755 / NCIMB 13165 / 161).